We begin with the raw amino-acid sequence, 450 residues long: Tubulin beta chain (450 aa).

GTP contacts are provided by glutamate 69, serine 138, glycine 142, threonine 143, glycine 144, asparagine 204, and asparagine 226. Mg(2+) is bound at residue glutamate 69. Residues 427–450 (DATIDQEFEDEEEVEEQNDDSDEQ) are disordered. Positions 430-450 (IDQEFEDEEEVEEQNDDSDEQ) are enriched in acidic residues.

This sequence belongs to the tubulin family. Dimer of alpha and beta chains. A typical microtubule is a hollow water-filled tube with an outer diameter of 25 nm and an inner diameter of 15 nM. Alpha-beta heterodimers associate head-to-tail to form protofilaments running lengthwise along the microtubule wall with the beta-tubulin subunit facing the microtubule plus end conferring a structural polarity. Microtubules usually have 13 protofilaments but different protofilament numbers can be found in some organisms and specialized cells. It depends on Mg(2+) as a cofactor.

The protein resides in the cytoplasm. Its subcellular location is the cytoskeleton. Tubulin is the major constituent of microtubules, a cylinder consisting of laterally associated linear protofilaments composed of alpha- and beta-tubulin heterodimers. Microtubules grow by the addition of GTP-tubulin dimers to the microtubule end, where a stabilizing cap forms. Below the cap, tubulin dimers are in GDP-bound state, owing to GTPase activity of alpha-tubulin. The polypeptide is Tubulin beta chain (Bombyx mori (Silk moth)).